Here is a 454-residue protein sequence, read N- to C-terminus: MSDNDTIVAQATPPGRGGVGILRISGLKAREVAETVLGKLPKPRYADYLPFKDADGSVLDQGIALWFPGPNSFTGEDVLELQGHGGPVILDLLLKRILTIPDLRIARPGEFSERAFLNDKLDLAQAEAIADLIDASSEQAARSALNSLQGAFSARVNHLVEALTHLRIYVEAAIDFPDEEIDFLSDGKIEAQLNDVIADLDAVRAEARQGSLLREGMKVVIAGRPNAGKSSLLNALAGREAAIVTDIAGTTRDVLREHIHIDGMPLHIIDTAGLREASDEVERIGIERAWQEIEQADRVLFMVDGTTTDAVDPAEIWPEFIARLPAKLPITVVRNKADITGETLGMSEVNGHALIRLSARTGEGVDVLRNHLKQSMGFDTNMEGGFLARRRHLQALEQAAEHLQQGKAQLLGAWAGELLAEELRLAQQNLSEITGEFTSDDLLGRIFSSFCIGK.

Residues Arg23, Glu80, and Lys120 each contribute to the (6S)-5-formyl-5,6,7,8-tetrahydrofolate site. The 162-residue stretch at 216–377 (GMKVVIAGRP…LRNHLKQSMG (162 aa)) folds into the TrmE-type G domain. Asn226 is a K(+) binding site. Residues 226–231 (NAGKSS), 245–251 (TDIAGTT), 270–273 (DTAG), 335–338 (NKAD), and 358–360 (SAR) contribute to the GTP site. Ser230 is a Mg(2+) binding site. K(+) contacts are provided by Thr245, Ile247, and Thr250. Mg(2+) is bound at residue Thr251. Lys454 is a (6S)-5-formyl-5,6,7,8-tetrahydrofolate binding site.

Belongs to the TRAFAC class TrmE-Era-EngA-EngB-Septin-like GTPase superfamily. TrmE GTPase family. In terms of assembly, homodimer. Heterotetramer of two MnmE and two MnmG subunits. Requires K(+) as cofactor.

It is found in the cytoplasm. Functionally, exhibits a very high intrinsic GTPase hydrolysis rate. Involved in the addition of a carboxymethylaminomethyl (cmnm) group at the wobble position (U34) of certain tRNAs, forming tRNA-cmnm(5)s(2)U34. In Escherichia coli O17:K52:H18 (strain UMN026 / ExPEC), this protein is tRNA modification GTPase MnmE.